Here is a 234-residue protein sequence, read N- to C-terminus: Uridylate kinase (234 aa).

Residue lysine 9 to glycine 12 coordinates ATP. Glycine 51 is a binding site for UMP. ATP contacts are provided by glycine 52 and arginine 56. UMP is bound by residues aspartate 71 and cysteine 132–threonine 139. The ATP site is built by threonine 159, tyrosine 165, and aspartate 168.

It belongs to the UMP kinase family. Homohexamer.

The protein localises to the cytoplasm. The enzyme catalyses UMP + ATP = UDP + ADP. The protein operates within pyrimidine metabolism; CTP biosynthesis via de novo pathway; UDP from UMP (UMPK route): step 1/1. With respect to regulation, inhibited by UTP. Its function is as follows. Catalyzes the reversible phosphorylation of UMP to UDP. The protein is Uridylate kinase of Prochlorococcus marinus (strain MIT 9215).